Consider the following 228-residue polypeptide: 7-cyano-7-deazaguanine synthase (228 aa).

9-19 (LSGGPDSTTVL) serves as a coordination point for ATP. Zn(2+)-binding residues include Cys193, Cys203, Cys206, and Cys209.

The protein belongs to the QueC family. It depends on Zn(2+) as a cofactor.

The catalysed reaction is 7-carboxy-7-deazaguanine + NH4(+) + ATP = 7-cyano-7-deazaguanine + ADP + phosphate + H2O + H(+). Its pathway is purine metabolism; 7-cyano-7-deazaguanine biosynthesis. Catalyzes the ATP-dependent conversion of 7-carboxy-7-deazaguanine (CDG) to 7-cyano-7-deazaguanine (preQ(0)). The polypeptide is 7-cyano-7-deazaguanine synthase (Rickettsia massiliae (strain Mtu5)).